A 217-amino-acid chain; its full sequence is Large ribosomal subunit protein uL1 (217 aa).

Belongs to the universal ribosomal protein uL1 family.

The chain is Large ribosomal subunit protein uL1 (RpL10Ab) from Drosophila melanogaster (Fruit fly).